The sequence spans 79 residues: uncharacterized protein (79 aa).

Its subcellular location is the mitochondrion. This is an uncharacterized protein from Oenothera berteroana (Bertero's evening primrose).